The sequence spans 403 residues: Phosphoglycerate kinase (403 aa).

Substrate is bound by residues 21–23 (DFN), arginine 36, 59–62 (HLGR), arginine 119, and arginine 154. ATP-binding positions include lysine 207, glycine 299, glutamate 330, and 357–360 (GGDA).

This sequence belongs to the phosphoglycerate kinase family. Monomer.

The protein resides in the cytoplasm. The catalysed reaction is (2R)-3-phosphoglycerate + ATP = (2R)-3-phospho-glyceroyl phosphate + ADP. It participates in carbohydrate degradation; glycolysis; pyruvate from D-glyceraldehyde 3-phosphate: step 2/5. This Chlamydia trachomatis serovar L2 (strain ATCC VR-902B / DSM 19102 / 434/Bu) protein is Phosphoglycerate kinase.